The primary structure comprises 135 residues: Large ribosomal subunit protein eL27z (135 aa).

Belongs to the eukaryotic ribosomal protein eL27 family.

In Arabidopsis thaliana (Mouse-ear cress), this protein is Large ribosomal subunit protein eL27z (RPL27A).